The sequence spans 203 residues: Sperm-specific protein PHI-2B/PHI-3 (203 aa).

Basic residues predominate over residues 1–35 (MPSPSRKSRSRSRSRSKSPKRSPAKKARKTPKKPR). Disordered stretches follow at residues 1-46 (MPSP…PSTL) and 104-203 (KTSA…KSKK). The region spanning 41–120 (KKPSTLSMIV…GATGSFRVGK (80 aa)) is the H15 domain. Composition is skewed to basic residues over residues 126-140 (KKAKKAKSPKKKSSK) and 147-203 (KAKK…KSKK).

In terms of processing, PL-II* and PL-IV are produced by post-translational cleavage of a common precursor. Sperm.

It is found in the nucleus. Its subcellular location is the chromosome. Its function is as follows. Linker histones are implicated in chromatin remodeling and/or transcriptional regulation during spermiogenesis, the process of spermatid maturation into spermatozoa. Protamines substitute for histones in the chromatin of sperm during the haploid phase of spermatogenesis. They compact sperm DNA into a highly condensed, stable and inactive complex. In Mytilus trossulus (Blue mussel), this protein is Sperm-specific protein PHI-2B/PHI-3.